A 787-amino-acid chain; its full sequence is Transcription factor SOX-6 (787 aa).

The interval 1–46 is disordered; that stretch reads MSSKQATSPFACAADGEDAMTQDLTSREKEEGSDQHVASHLPLHPI. Residues 25-34 are compositionally biased toward basic and acidic residues; the sequence is TSREKEEGSD. A Phosphothreonine modification is found at T119. Residues 184-262 are a coiled coil; sequence LAEKERQLST…LLQQQIQVQG (79 aa). Residues 340–429 are disordered; that stretch reads PGAKMPSTPQ…KSSIPSPIGG (90 aa). The span at 352-361 shows a compositional bias: polar residues; it reads NTAGTVSPTG. A Phosphoserine modification is found at S358. A Phosphothreonine modification is found at T360. Residues K363 and K376 each participate in a glycyl lysine isopeptide (Lys-Gly) (interchain with G-Cter in SUMO) cross-link. A phosphoserine mark is found at S398 and S401. Positions 398-420 are enriched in polar residues; it reads SPTSPTQNLFPASKTSPVNLPNK. The segment at residues 580–648 is a DNA-binding region (HMG box); that stretch reads IKRPMNAFMV…IHLEKYPNYK (69 aa). Positions 712 to 740 are enriched in polar residues; that stretch reads TPSPQMTSDCSSTSASPEPSLPVIQSTYG. A disordered region spans residues 712 to 787; it reads TPSPQMTSDC…NEAPEAVSAN (76 aa). Residues 755 to 768 show a composition bias toward acidic residues; it reads NGEDEMEMYDDYED.

As to quaternary structure, homodimer. Interacts with DAZAP2. May interact with CENPK. In terms of processing, sumoylation inhibits the transcriptional activity.

The protein resides in the nucleus. It is found in the cytoplasm. In terms of biological role, transcription factor that plays a key role in several developmental processes, including neurogenesis, chondrocytes differentiation and cartilage formation. Specifically binds the 5'-AACAAT-3' DNA motif present in enhancers and super-enhancers and promotes expression of genes important for chondrogenesis. Required for overt chondrogenesis when condensed prechondrocytes differentiate into early stage chondrocytes: SOX5 and SOX6 cooperatively bind with SOX9 on active enhancers and super-enhancers associated with cartilage-specific genes, and thereby potentiate SOX9's ability to transactivate. Not involved in precartilaginous condensation, the first step in chondrogenesis, during which skeletal progenitors differentiate into prechondrocytes. Together with SOX5, required to form and maintain a pool of highly proliferating chondroblasts between epiphyses and metaphyses, to form columnar chondroblasts, delay chondrocyte prehypertrophy but promote hypertrophy, and to delay terminal differentiation of chondrocytes on contact with ossification fronts. Binds to the proximal promoter region of the myelin protein MPZ gene, and is thereby involved in the differentiation of oligodendroglia in the developing spinal tube. Binds to the gene promoter of MBP and acts as a transcriptional repressor. The chain is Transcription factor SOX-6 from Pongo abelii (Sumatran orangutan).